A 397-amino-acid chain; its full sequence is Acetate kinase 2 (397 aa).

Residue N10 coordinates Mg(2+). K17 lines the ATP pocket. R90 contacts substrate. The Proton donor/acceptor role is filled by D147. Residues 207-211 (HLGNG), 281-283 (DAR), and 329-333 (GIGEN) contribute to the ATP site. E385 contributes to the Mg(2+) binding site.

Belongs to the acetokinase family. In terms of assembly, homodimer. The cofactor is Mg(2+). It depends on Mn(2+) as a cofactor.

It localises to the cytoplasm. The catalysed reaction is acetate + ATP = acetyl phosphate + ADP. The protein operates within metabolic intermediate biosynthesis; acetyl-CoA biosynthesis; acetyl-CoA from acetate: step 1/2. Catalyzes the formation of acetyl phosphate from acetate and ATP. Can also catalyze the reverse reaction. This Vibrio parahaemolyticus serotype O3:K6 (strain RIMD 2210633) protein is Acetate kinase 2.